Consider the following 125-residue polypeptide: 14 kDa phosphohistidine phosphatase (125 aa).

Residue alanine 2 is modified to N-acetylalanine. Lysine 21 contributes to the substrate binding site. The active-site Proton acceptor is the histidine 53. Position 94-96 (94-96 (SMA)) interacts with substrate.

This sequence belongs to the janus family. As to quaternary structure, monomer. As to expression, expressed abundantly in heart and skeletal muscle.

The protein resides in the cytoplasm. It catalyses the reaction N(pros)-phospho-L-histidyl-[protein] + H2O = L-histidyl-[protein] + phosphate. The catalysed reaction is N(tele)-phospho-L-histidyl-[protein] + H2O = L-histidyl-[protein] + phosphate. Exhibits phosphohistidine phosphatase activity. The protein is 14 kDa phosphohistidine phosphatase (PHPT1) of Homo sapiens (Human).